A 60-amino-acid chain; its full sequence is Small ribosomal subunit protein eS31 (60 aa).

Zn(2+) is bound by residues C24, C27, C42, and C45. The C4-type zinc finger occupies 24–45; it reads CPRCGPGVFMADHGNRYACGRC.

This sequence belongs to the eukaryotic ribosomal protein eS31 family. In terms of assembly, part of the 30S ribosomal subunit. The cofactor is Zn(2+).

This chain is Small ribosomal subunit protein eS31, found in Methanopyrus kandleri (strain AV19 / DSM 6324 / JCM 9639 / NBRC 100938).